Consider the following 225-residue polypeptide: Phosphoribosylformylglycinamidine synthase subunit PurQ (225 aa).

In terms of domain architecture, Glutamine amidotransferase type-1 spans 6-225 (FGVVVFPGSN…WQSILRSFAA (220 aa)). The Nucleophile role is filled by C89. Active-site residues include H198 and E200.

As to quaternary structure, part of the FGAM synthase complex composed of 1 PurL, 1 PurQ and 2 PurS subunits.

It localises to the cytoplasm. It carries out the reaction N(2)-formyl-N(1)-(5-phospho-beta-D-ribosyl)glycinamide + L-glutamine + ATP + H2O = 2-formamido-N(1)-(5-O-phospho-beta-D-ribosyl)acetamidine + L-glutamate + ADP + phosphate + H(+). The enzyme catalyses L-glutamine + H2O = L-glutamate + NH4(+). It participates in purine metabolism; IMP biosynthesis via de novo pathway; 5-amino-1-(5-phospho-D-ribosyl)imidazole from N(2)-formyl-N(1)-(5-phospho-D-ribosyl)glycinamide: step 1/2. Functionally, part of the phosphoribosylformylglycinamidine synthase complex involved in the purines biosynthetic pathway. Catalyzes the ATP-dependent conversion of formylglycinamide ribonucleotide (FGAR) and glutamine to yield formylglycinamidine ribonucleotide (FGAM) and glutamate. The FGAM synthase complex is composed of three subunits. PurQ produces an ammonia molecule by converting glutamine to glutamate. PurL transfers the ammonia molecule to FGAR to form FGAM in an ATP-dependent manner. PurS interacts with PurQ and PurL and is thought to assist in the transfer of the ammonia molecule from PurQ to PurL. In Synechococcus sp. (strain JA-2-3B'a(2-13)) (Cyanobacteria bacterium Yellowstone B-Prime), this protein is Phosphoribosylformylglycinamidine synthase subunit PurQ.